We begin with the raw amino-acid sequence, 393 residues long: Methylthioribose kinase (393 aa).

Residues Asn38, Lys53, and 107–109 (EDL) contribute to the ATP site. Position 225 (Asp225) interacts with substrate. 242 to 244 (DPE) is an ATP binding site. Residue Arg332 participates in substrate binding.

This sequence belongs to the methylthioribose kinase family. As to quaternary structure, homodimer.

It catalyses the reaction 5-(methylsulfanyl)-D-ribose + ATP = 5-(methylsulfanyl)-alpha-D-ribose 1-phosphate + ADP + H(+). The protein operates within amino-acid biosynthesis; L-methionine biosynthesis via salvage pathway; S-methyl-5-thio-alpha-D-ribose 1-phosphate from S-methyl-5'-thioadenosine (hydrolase route): step 2/2. In terms of biological role, catalyzes the phosphorylation of methylthioribose into methylthioribose-1-phosphate. The protein is Methylthioribose kinase of Bacillus cereus (strain AH187).